Consider the following 167-residue polypeptide: Phospholipase A2 inhibitor alpha-like protein (167 aa).

An N-terminal signal peptide occupies residues 1 to 19; that stretch reads MQLILLSSLLLLGLSLANG. The C-type lectin domain maps to 62-163; it reads GSERLYVTNK…CDEDLLVVCE (102 aa). 2 disulfides stabilise this stretch: cysteine 83–cysteine 162 and cysteine 140–cysteine 154.

Belongs to the alpha-type phospholipase A2 inhibitor family. As to quaternary structure, homotrimer.

Its subcellular location is the secreted. Functionally, has no PLA2 inhibitory activity. This chain is Phospholipase A2 inhibitor alpha-like protein, found in Elaphe climacophora (Japanese rat snake).